We begin with the raw amino-acid sequence, 85 residues long: U4-theraphotoxin-Hhn1a (85 aa).

Positions 1–22 are cleaved as a signal peptide; the sequence is MKMTLIAILTCAAVLVLHTTAA. Positions 23 to 48 are excised as a propeptide; that stretch reads EELEAESQLMEVGMPDTELEAVDEER. 3 disulfides stabilise this stretch: cysteine 52–cysteine 66, cysteine 56–cysteine 77, and cysteine 71–cysteine 82.

Belongs to the neurotoxin 12 (Hwtx-2) family. 02 (Hwtx-2) subfamily. Monomer. Expressed by the venom gland.

It localises to the secreted. In terms of biological role, neurotoxin active on both insects and mammals. In Cyriopagopus hainanus (Chinese bird spider), this protein is U4-theraphotoxin-Hhn1a.